A 127-amino-acid polypeptide reads, in one-letter code: Glycine cleavage system H protein (127 aa).

The region spanning 24–105 (AALVGITDFA…YGEGWLVKIR (82 aa)) is the Lipoyl-binding domain. Lys65 is modified (N6-lipoyllysine).

It belongs to the GcvH family. The glycine cleavage system is composed of four proteins: P, T, L and H. The cofactor is (R)-lipoate.

The glycine cleavage system catalyzes the degradation of glycine. The H protein shuttles the methylamine group of glycine from the P protein to the T protein. In Chlorobium limicola (strain DSM 245 / NBRC 103803 / 6330), this protein is Glycine cleavage system H protein.